The chain runs to 1174 residues: K(+) efflux antiporter 2, chloroplastic (1174 aa).

A chloroplast-targeting transit peptide spans 1–57 (MDFASSVQRQSMFHGGADFASYCLPNRMISAKLCPKGLGGTRFWDPMIDSKVRSAIR). Residues 58–565 (SKRNVSYRSS…MFPQQEVNEE (508 aa)) are Stromal-facing. The segment at 119-141 (GSDDREVTFSKEEKDTREQDSAP) is disordered. The stretch at 142–350 (SLEELRDLLN…ALQRAEKTLF (209 aa)) forms a coiled coil. Residue lysine 170 is modified to N6-acetyllysine; by NSI. A compositionally biased stretch (basic and acidic residues) spans 420 to 448 (EAEGEAEKSKNVVLTKKQEVQKDLPRESS). Residues 420 to 457 (EAEGEAEKSKNVVLTKKQEVQKDLPRESSSHNGTKTSL) are disordered. Residues 566-586 (EASLLDVLWLLLASVIFVPLF) form a helical membrane-spanning segment. At 587 to 592 (QKIPGG) the chain is on the chloroplast intermembrane side. Residues 593–613 (SPVLGYLAAGILIGPYGLSII) form a helical membrane-spanning segment. Residues 614-620 (RNVHGTK) are Stromal-facing. Residues 621–641 (AIAEFGVVFLLFNIGLELSVE) form a helical membrane-spanning segment. Topologically, residues 642 to 648 (RLSSMKK) are chloroplast intermembrane. The helical transmembrane segment at 649 to 669 (YVFGLGSAQVLVTAAVIGLIT) threads the bilayer. Topologically, residues 670–678 (HYVAGQAGP) are stromal. Residues 679 to 699 (AAIVIGNGLALSSTAVVLQVL) traverse the membrane as a helical segment. At 700–713 (QERGESTSRHGRAT) the chain is on the chloroplast intermembrane side. The helical transmembrane segment at 714–734 (FSVLLFQDLAVVVLLILIPLI) threads the bilayer. Topologically, residues 735–746 (SPNSSKGGIGFQ) are stromal. Residues 747–767 (AIAEALGLAAIKAAVAITGII) traverse the membrane as a helical segment. Over 768–807 (AGGRLLLRPIYKQIAENRNAEIFSANTLLVILGTSLLTAR) the chain is Chloroplast intermembrane. A helical membrane pass occupies residues 808–828 (AGLSMALGAFLAGLLLAETEF). Topologically, residues 829–841 (SLQVESDIAPYRG) are stromal. The helical transmembrane segment at 842–862 (LLLGLFFMTVGMSIDPKLLLA) threads the bilayer. At 863–865 (NFP) the chain is on the chloroplast intermembrane side. The chain crosses the membrane as a helical span at residues 866 to 886 (LIMGTLGLLLVGKTILVVIIG). Over 887–898 (KLFGISIISAVR) the chain is Stromal. A helical membrane pass occupies residues 899–919 (VGLLLAPGGEFAFVAFGEAVN). Over 920 to 928 (QGIMTPQLS) the chain is Chloroplast intermembrane. The helical transmembrane segment at 929–949 (SLLFLVVGISMALTPWLAAGG) threads the bilayer. Residues 950–1174 (QLIASRFELQ…NQIIEGTLAI (225 aa)) lie on the Stromal side of the membrane. Residues 975–1092 (QGHIIICGFG…EKAGATAVVP (118 aa)) enclose the RCK N-terminal domain. The tract at residues 1141 to 1174 (SLGYGFSRSTSKPKPPSPSETSDDNQIIEGTLAI) is disordered.

This sequence belongs to the monovalent cation:proton antiporter 2 (CPA2) transporter (TC 2.A.37) family. KEA (TC 2.A.37.1) subfamily. Post-translationally, acetylated at Lys-170 by the stromal acetyltransferase enzyme NSI. Detected in leaves, stems and flowers. Expressed in shoots and roots. Mainly localized to leaf veins, hypocotyls, mesophylls and guard cells. Accumulates at high levels in small and dividing plastids (at protein level).

The protein resides in the plastid. The protein localises to the chloroplast inner membrane. It localises to the plastid inner membrane. The catalysed reaction is K(+)(in) + H(+)(out) = K(+)(out) + H(+)(in). Its activity is regulated as follows. Repressed by sodium ions Na(+). Its function is as follows. Electroneutral K(+)/H(+) efflux antiporter modulating monovalent cation and pH homeostasis in plastids, especially during plastid division and thylakoid membrane formation. Transports K(+) and Cs(+) preferentially relative to Na(+) or Li(+). May function in osmotic adjustment. Collaboratively with KEA1, adjusts alkaline stromal pH upon light to dark transitions in plastids. Together with KEA1, critical for chloroplast development, including chloroplast RNA-metabolism (e.g. rRNA maturation, polysome loading and RNA-protein interactions) and plastid gene expression (PGE), ion homeostasis, and photosynthesis. Contributes, during early seedling development, to the regulation of photosynthesis and abscisic acid- (ABA-) mediated primary root growth in a sucrose-dependent manner. Involved in the regulation of reactive oxygen and nitrogen species (ROS and RNS) metabolism. Required in roots for rapid hyperosmotic-induced Ca(2+) responses and for osmo-sensory potentiation in hyperosmotic conditions. May counteract resilience to drought and salt stress, involving photorespiratory pathway and stomata closure. The sequence is that of K(+) efflux antiporter 2, chloroplastic from Arabidopsis thaliana (Mouse-ear cress).